The following is a 560-amino-acid chain: Formate--tetrahydrofolate ligase (560 aa).

An ATP-binding site is contributed by 69–76; sequence TPAGEGKS.

It belongs to the formate--tetrahydrofolate ligase family.

The enzyme catalyses (6S)-5,6,7,8-tetrahydrofolate + formate + ATP = (6R)-10-formyltetrahydrofolate + ADP + phosphate. The protein operates within one-carbon metabolism; tetrahydrofolate interconversion. This chain is Formate--tetrahydrofolate ligase, found in Bacillus pumilus (strain SAFR-032).